The sequence spans 103 residues: Co-chaperonin GroES (103 aa).

The protein belongs to the GroES chaperonin family. Heptamer of 7 subunits arranged in a ring. Interacts with the chaperonin GroEL.

The protein localises to the cytoplasm. In terms of biological role, together with the chaperonin GroEL, plays an essential role in assisting protein folding. The GroEL-GroES system forms a nano-cage that allows encapsulation of the non-native substrate proteins and provides a physical environment optimized to promote and accelerate protein folding. GroES binds to the apical surface of the GroEL ring, thereby capping the opening of the GroEL channel. The sequence is that of Co-chaperonin GroES from Parasynechococcus marenigrum (strain WH8102).